A 505-amino-acid polypeptide reads, in one-letter code: RNA-binding region-containing protein 3 (505 aa).

The RRM 1 domain maps to 15-90 (KTLIIRHLPR…RTLVVEFAKD (76 aa)). Disordered stretches follow at residues 96-123 (ILKD…QPSV), 193-236 (PPMF…EEER), 354-374 (AQVP…SEFI), and 486-505 (ARSA…GRKH). Over residues 193–214 (PPMFEMPSGPLPPPFPPENPPL) the composition is skewed to pro residues. Composition is skewed to acidic residues over residues 221-235 (GSEE…DEEE) and 361-370 (EEQEEDEDIP). The region spanning 405–488 (CRLYVKNVAK…KPLVVQFARS (84 aa)) is the RRM 2 domain. Residues 491–505 (PKQESADPKKGGRKH) are compositionally biased toward basic and acidic residues.

In terms of assembly, component of the U11/U12 snRNPs that are part of the U12-type spliceosome.

The protein localises to the nucleus. In terms of biological role, participates in pre-mRNA U12-dependent splicing, performed by the minor spliceosome which removes U12-type introns. U12-type introns comprise less than 1% of all non-coding sequences. The sequence is that of RNA-binding region-containing protein 3 from Danio rerio (Zebrafish).